A 194-amino-acid chain; its full sequence is 7-methyl-GTP pyrophosphatase (194 aa).

Asp69 (proton acceptor) is an active-site residue.

It belongs to the Maf family. YceF subfamily. The cofactor is a divalent metal cation.

The protein localises to the cytoplasm. The enzyme catalyses N(7)-methyl-GTP + H2O = N(7)-methyl-GMP + diphosphate + H(+). Its function is as follows. Nucleoside triphosphate pyrophosphatase that hydrolyzes 7-methyl-GTP (m(7)GTP). May have a dual role in cell division arrest and in preventing the incorporation of modified nucleotides into cellular nucleic acids. The polypeptide is 7-methyl-GTP pyrophosphatase (yceF1) (Salmonella paratyphi A (strain ATCC 9150 / SARB42)).